The chain runs to 128 residues: Probable prefoldin subunit 6 (128 aa).

Belongs to the prefoldin subunit beta family. Heterohexamer of two PFD-alpha type and four PFD-beta type subunits.

The protein localises to the cytoplasm. In terms of biological role, binds specifically to cytosolic chaperonin (c-CPN) and transfers target proteins to it. Binds to nascent polypeptide chain and promotes folding in an environment in which there are many competing pathways for nonnative proteins. Required for positioning of the mitotic spindle. The chain is Probable prefoldin subunit 6 from Caenorhabditis briggsae.